The chain runs to 298 residues: N-acetylmuramic acid 6-phosphate etherase (298 aa).

An SIS domain is found at 55–218 (IHTQVSGGGR…STGLMIKSGK (164 aa)). The Proton donor role is filled by Glu83. Glu114 is an active-site residue.

Belongs to the GCKR-like family. MurNAc-6-P etherase subfamily. Homodimer.

It carries out the reaction N-acetyl-D-muramate 6-phosphate + H2O = N-acetyl-D-glucosamine 6-phosphate + (R)-lactate. It functions in the pathway amino-sugar metabolism; 1,6-anhydro-N-acetylmuramate degradation. The protein operates within amino-sugar metabolism; N-acetylmuramate degradation. It participates in cell wall biogenesis; peptidoglycan recycling. Its function is as follows. Specifically catalyzes the cleavage of the D-lactyl ether substituent of MurNAc 6-phosphate, producing GlcNAc 6-phosphate and D-lactate. Together with AnmK, is also required for the utilization of anhydro-N-acetylmuramic acid (anhMurNAc) either imported from the medium or derived from its own cell wall murein, and thus plays a role in cell wall recycling. The sequence is that of N-acetylmuramic acid 6-phosphate etherase from Escherichia coli O127:H6 (strain E2348/69 / EPEC).